The following is a 70-amino-acid chain: Turripeptide Pal9.2 (70 aa).

The first 20 residues, 1-20 (MKVYCLLVVLLVGLVSQTQG), serve as a signal peptide directing secretion. In terms of domain architecture, Kazal-like spans 21–70 (QLDKKCNMACTLDYRPVCGSDGKTYPNRCALTSTACESQQSITVLHDGEC). 3 cysteine pairs are disulfide-bonded: cysteine 26–cysteine 56, cysteine 30–cysteine 49, and cysteine 38–cysteine 70.

This sequence belongs to the conopeptide P-like superfamily. Expressed by the venom duct.

The protein localises to the secreted. Functionally, acts as a neurotoxin by inhibiting an ion channel. May also act as a serine protease inhibitor, since it possess the kazal serine protease inhibitor signature. In Polystira albida (White giant-turris), this protein is Turripeptide Pal9.2.